Consider the following 392-residue polypeptide: 8-amino-7-oxononanoate synthase (392 aa).

108 to 109 (GF) serves as a coordination point for pyridoxal 5'-phosphate. Substrate is bound at residue His133. Pyridoxal 5'-phosphate is bound by residues Ser180, 205–208 (DDAH), and 236–239 (TLSK). The residue at position 239 (Lys239) is an N6-(pyridoxal phosphate)lysine. Residue Thr353 participates in substrate binding.

It belongs to the class-II pyridoxal-phosphate-dependent aminotransferase family. BioF subfamily. Homodimer. The cofactor is pyridoxal 5'-phosphate.

The enzyme catalyses 6-carboxyhexanoyl-[ACP] + L-alanine + H(+) = (8S)-8-amino-7-oxononanoate + holo-[ACP] + CO2. It participates in cofactor biosynthesis; biotin biosynthesis. In terms of biological role, catalyzes the decarboxylative condensation of pimeloyl-[acyl-carrier protein] and L-alanine to produce 8-amino-7-oxononanoate (AON), [acyl-carrier protein], and carbon dioxide. The sequence is that of 8-amino-7-oxononanoate synthase from Bacillus pumilus (strain SAFR-032).